The primary structure comprises 421 residues: UDP-N-acetylglucosamine 1-carboxyvinyltransferase (421 aa).

22 to 23 is a binding site for phosphoenolpyruvate; sequence KN. Arg-93 is a binding site for UDP-N-acetyl-alpha-D-glucosamine. Cys-117 serves as the catalytic Proton donor. Position 117 is a 2-(S-cysteinyl)pyruvic acid O-phosphothioketal (Cys-117). UDP-N-acetyl-alpha-D-glucosamine contacts are provided by residues 122-126, Asp-308, and Leu-330; that span reads RPVDL.

Belongs to the EPSP synthase family. MurA subfamily.

The protein resides in the cytoplasm. The enzyme catalyses phosphoenolpyruvate + UDP-N-acetyl-alpha-D-glucosamine = UDP-N-acetyl-3-O-(1-carboxyvinyl)-alpha-D-glucosamine + phosphate. It participates in cell wall biogenesis; peptidoglycan biosynthesis. Its function is as follows. Cell wall formation. Adds enolpyruvyl to UDP-N-acetylglucosamine. The sequence is that of UDP-N-acetylglucosamine 1-carboxyvinyltransferase from Helicobacter hepaticus (strain ATCC 51449 / 3B1).